Here is a 490-residue protein sequence, read N- to C-terminus: (21S)-21-acetyl-1-hydroxy-apo-melianone synthase CYP88A164 (490 aa).

A helical membrane pass occupies residues 4 to 24; sequence DLLWLILAIVVGTYVVLFGFL. C438 is a binding site for heme.

Belongs to the cytochrome P450 family. Heme is required as a cofactor. As to expression, mainly expressed in petioles and, to a lower extent, in roots.

It is found in the membrane. It catalyses the reaction (21S)-21-acetoxyl-apo-melianone + reduced [NADPH--hemoprotein reductase] + O2 = (21S)-21-acetyl-1-hydroxy-apo-melianone + oxidized [NADPH--hemoprotein reductase] + H2O + H(+). Its pathway is secondary metabolite biosynthesis; terpenoid biosynthesis. Monooxygenase involved in the biosynthesis of limonoids triterpene natural products such as azadirachtin, an antifeedant widely used as bioinsecticide, and possessing many medicinal applications including anti-tumoral, anti-malarial, anti-rheumatic, antibacterial, anti-inflammatory, anti-pyretic and diuretic effects. Catalyzes the conversion of (21S)-21-acetoxyl-apo-melianone to (21S)-21-acetyl-1-hydroxy-apo-melianone. This Melia azedarach (Chinaberry tree) protein is (21S)-21-acetyl-1-hydroxy-apo-melianone synthase CYP88A164.